A 357-amino-acid polypeptide reads, in one-letter code: Homoserine kinase (357 aa).

This sequence belongs to the GHMP kinase family. Homoserine kinase subfamily.

The enzyme catalyses L-homoserine + ATP = O-phospho-L-homoserine + ADP + H(+). Its pathway is amino-acid biosynthesis; L-threonine biosynthesis; L-threonine from L-aspartate: step 4/5. Commits homoserine to the threonine biosynthesis pathway by catalyzing its O-phosphorylation. This is Homoserine kinase from Cryptococcus neoformans var. grubii serotype A (strain H99 / ATCC 208821 / CBS 10515 / FGSC 9487) (Filobasidiella neoformans var. grubii).